We begin with the raw amino-acid sequence, 338 residues long: General transcription and DNA repair factor IIH subunit TFB4 (338 aa).

At Met1 the chain carries N-acetylmethionine. Residues 289–308 (CSVCLCVLSIIPPGNKCPAC) form a C4-type zinc finger.

The protein belongs to the TFB4 family. Component of the 7-subunit TFIIH core complex composed of XPB/SSL2, XPD/RAD3, SSL1, TFB1, TFB2, TFB4 and TFB5, which is active in NER. The core complex associates with the 3-subunit CTD-kinase module TFIIK composed of CCL1, KIN28 and TFB3 to form the 10-subunit holoenzyme (holo-TFIIH) active in transcription. An additionnal subunit, TFB6, plays a role in the dissociation of the SSL2 helicase from TFIIH after transcription initiation.

It is found in the nucleus. Component of the general transcription and DNA repair factor IIH (TFIIH) core complex, which is involved in general and transcription-coupled nucleotide excision repair (NER) of damaged DNA and, when complexed to TFIIK, in RNA transcription by RNA polymerase II. In NER, TFIIH acts by opening DNA around the lesion to allow the excision of the damaged oligonucleotide and its replacement by a new DNA fragment. In transcription, TFIIH has an essential role in transcription initiation. When the pre-initiation complex (PIC) has been established, TFIIH is required for promoter opening and promoter escape. Phosphorylation of the C-terminal tail (CTD) of the largest subunit of RNA polymerase II by the kinase module TFIIK controls the initiation of transcription. The protein is General transcription and DNA repair factor IIH subunit TFB4 (TFB4) of Saccharomyces cerevisiae (strain ATCC 204508 / S288c) (Baker's yeast).